A 317-amino-acid chain; its full sequence is MYTKIIGTGSYLPEQVRTNADLEKMVDTSDEWIVTRTGIRERHIAAPNETVSTMGFEAATRAIEMAGIEKDQIGLIVVATTSATHAFPSAACQIQSMLDIKGCPAFDVAAACAGFTYALSVADQYVKSGAVKYALVVGSDVLARTCDPTDRGTIIIFGDGAGAAVLAASEEPGIISTHLHADGSYGELLTLPNADRVNPENSIHLTMAGNEVFKVAVTELAHIVDETLAANNLDRSQLDWLVPHQANLRIISATAKKLGMSMDNVVVTLDRHGNTSAASVPCALDEAVRDGRIKPGQLVLLEAFGGGFTWGSALVRF.

Residues Cys112 and His244 contribute to the active site. The ACP-binding stretch occupies residues Gln245 to Arg249. Asn274 is an active-site residue.

The protein belongs to the thiolase-like superfamily. FabH family. In terms of assembly, homodimer.

It is found in the cytoplasm. It catalyses the reaction malonyl-[ACP] + acetyl-CoA + H(+) = 3-oxobutanoyl-[ACP] + CO2 + CoA. The protein operates within lipid metabolism; fatty acid biosynthesis. Catalyzes the condensation reaction of fatty acid synthesis by the addition to an acyl acceptor of two carbons from malonyl-ACP. Catalyzes the first condensation reaction which initiates fatty acid synthesis and may therefore play a role in governing the total rate of fatty acid production. Possesses both acetoacetyl-ACP synthase and acetyl transacylase activities. Its substrate specificity determines the biosynthesis of branched-chain and/or straight-chain of fatty acids. This Shigella boydii serotype 4 (strain Sb227) protein is Beta-ketoacyl-[acyl-carrier-protein] synthase III.